The chain runs to 336 residues: Flagellar filament 41 kDa core protein (336 aa).

The tract at residues 208 to 236 (AAPVQEGVQQEGAQQPAPATAPSQGGVNS) is disordered. Over residues 210–233 (PVQEGVQQEGAQQPAPATAPSQGG) the composition is skewed to low complexity.

This sequence belongs to the bacterial flagellin family. As to quaternary structure, the flagellum consists of an outer layer composed of repeating units of FlaA around a core that contains several antigenically related polypeptides.

It is found in the periplasmic flagellum. Its subcellular location is the periplasm. Component of the core of the flagella. The protein is Flagellar filament 41 kDa core protein (fla) of Borreliella burgdorferi (strain ATCC 35210 / DSM 4680 / CIP 102532 / B31) (Borrelia burgdorferi).